A 233-amino-acid polypeptide reads, in one-letter code: Ribosomal RNA large subunit methyltransferase E (233 aa).

G80, W82, D108, D124, and D148 together coordinate S-adenosyl-L-methionine. K188 (proton acceptor) is an active-site residue.

The protein belongs to the class I-like SAM-binding methyltransferase superfamily. RNA methyltransferase RlmE family.

The protein localises to the cytoplasm. It catalyses the reaction uridine(2552) in 23S rRNA + S-adenosyl-L-methionine = 2'-O-methyluridine(2552) in 23S rRNA + S-adenosyl-L-homocysteine + H(+). Its function is as follows. Specifically methylates the uridine in position 2552 of 23S rRNA at the 2'-O position of the ribose in the fully assembled 50S ribosomal subunit. This is Ribosomal RNA large subunit methyltransferase E from Ruegeria pomeroyi (strain ATCC 700808 / DSM 15171 / DSS-3) (Silicibacter pomeroyi).